A 160-amino-acid chain; its full sequence is 6,7-dimethyl-8-ribityllumazine synthase (160 aa).

5-amino-6-(D-ribitylamino)uracil-binding positions include W28, 59–61, and 81–83; these read ALE and CVI. 86–87 contributes to the (2S)-2-hydroxy-3-oxobutyl phosphate binding site; the sequence is ET. The Proton donor role is filled by H89. Residue N114 coordinates 5-amino-6-(D-ribitylamino)uracil. Residue R128 participates in (2S)-2-hydroxy-3-oxobutyl phosphate binding.

It belongs to the DMRL synthase family.

The enzyme catalyses (2S)-2-hydroxy-3-oxobutyl phosphate + 5-amino-6-(D-ribitylamino)uracil = 6,7-dimethyl-8-(1-D-ribityl)lumazine + phosphate + 2 H2O + H(+). The protein operates within cofactor biosynthesis; riboflavin biosynthesis; riboflavin from 2-hydroxy-3-oxobutyl phosphate and 5-amino-6-(D-ribitylamino)uracil: step 1/2. Functionally, catalyzes the formation of 6,7-dimethyl-8-ribityllumazine by condensation of 5-amino-6-(D-ribitylamino)uracil with 3,4-dihydroxy-2-butanone 4-phosphate. This is the penultimate step in the biosynthesis of riboflavin. The protein is 6,7-dimethyl-8-ribityllumazine synthase of Corynebacterium urealyticum (strain ATCC 43042 / DSM 7109).